Reading from the N-terminus, the 619-residue chain is ESX-2 secretion system protein EccA2 (619 aa).

373-380 (GPPGTGKT) provides a ligand contact to ATP.

This sequence belongs to the CbxX/CfxQ family. Part of the ESX-2 / type VII secretion system (T7SS), which is composed of cytosolic and membrane components. Residues 522-619 interact with an artificial EsxB-EsxA heterodimer from the adjacent ESX-1 locus.

The protein localises to the cytoplasm. Functionally, shows ATPase activity. Could provide energy for export of ESX-2 substrates. In Mycobacterium tuberculosis (strain ATCC 25618 / H37Rv), this protein is ESX-2 secretion system protein EccA2 (eccA2).